A 366-amino-acid polypeptide reads, in one-letter code: Inactive PGL/p-HBAD biosynthesis glycosyltransferase Mb2982c (366 aa).

2 disordered regions span residues 1–23 (MEET…PNAA) and 295–366 (DGDR…HGGP). Residues 295-311 (DGDRGHRWPEPPEERAG) are compositionally biased toward basic and acidic residues.

This sequence belongs to the UDP-glycosyltransferase family.

This chain is Inactive PGL/p-HBAD biosynthesis glycosyltransferase Mb2982c, found in Mycobacterium bovis (strain ATCC BAA-935 / AF2122/97).